The chain runs to 410 residues: Replication-associated protein G2P (410 aa).

An N-formylmethionine modification is found at Met-1.

This sequence belongs to the inovirus G2P protein family.

The enzyme catalyses ATP + (deoxyribonucleotide)n-3'-hydroxyl + 5'-phospho-(deoxyribonucleotide)m = (deoxyribonucleotide)n+m + AMP + diphosphate.. Its function is as follows. Isoform G2P plays an essential role in viral DNA replication. Binds the origin of replication and cleaves the dsDNA replicative form I (RFI) and becomes covalently bound to it via phosphotyrosine bond, generating the dsDNA replicative form II (RFII). In turn, viral DNA replication initiates at the 3'-OH of the cleavage site. After one round of rolling circle synthesis, protein G2P is linked to the newly synthesized ssDNA and joins the ends of the displaced strand to generate a circular single-stranded molecule ready to be packed into a virion. In terms of biological role, isoform G10P protein binds to double-stranded DNA and prevents hydrolysis by nucleases. Additionally, G10P is an inhibitor of DNA replication and may have a role in the transition from semiconservative replicative form DNA replication to single-stranded DNA synthesis in the life cycle. The polypeptide is Replication-associated protein G2P (II) (Enterobacteria phage fd (Bacteriophage fd)).